Consider the following 589-residue polypeptide: PTS system mannitol-specific EIICB component (589 aa).

Topologically, residues 1 to 25 are cytoplasmic; it reads MEEKVSLKVRVQKLGTSLSNMVMPN. A PTS EIIC type-2 domain is found at 14–347; sequence LGTSLSNMVM…LHADKSTEDS (334 aa). Residues 26–47 form a helical membrane-spanning segment; it reads IGAFIAWGVLTALFIADGYLPN. The Extracellular segment spans residues 48 to 51; that stretch reads EQLA. The chain crosses the membrane as a helical span at residues 52 to 72; the sequence is TVVGPMLTYLLPILIGYTGGY. Topologically, residues 73–135 are cytoplasmic; that stretch reads MIHGQRGAVV…PGFEMLVNNF (63 aa). Residues 136–157 form a helical membrane-spanning segment; sequence SAGLVGFALLLLAFYAIGPVVS. Residues 158 to 166 lie on the Extracellular side of the membrane; sequence TLTGAVGNG. The chain crosses the membrane as a helical span at residues 167 to 187; the sequence is VEAIVNARLLPMANIIIEPAK. Residues 188–274 are Cytoplasmic-facing; that stretch reads VLFLNNALNH…VMMKPTLFLA (87 aa). Residues 275–294 traverse the membrane as a helical segment; the sequence is AMAGGISGTFTFQLLDAGLK. The Extracellular segment spans residues 295 to 316; the sequence is SPASPGSIIAIMATAPKGVWPH. The chain crosses the membrane as a helical span at residues 317 to 338; it reads LNILLGVLVAAVVSFLIAALIL. Over 339-589 the chain is Cytoplasmic; it reads HADKSTEDSL…YDKMAARMYK (251 aa). Residues 381–476 enclose the PTS EIIB type-2 domain; that stretch reads EKIIFACDAG…SLTGASPIAE (96 aa). Cys387 serves as the catalytic Phosphocysteine intermediate; for EIIB activity. Cys387 bears the Phosphocysteine; by EIIA mark.

Homodimer.

It localises to the cell membrane. It catalyses the reaction D-mannitol(out) + N(pros)-phospho-L-histidyl-[protein] = D-mannitol 1-phosphate(in) + L-histidyl-[protein]. In terms of biological role, the phosphoenolpyruvate-dependent sugar phosphotransferase system (sugar PTS), a major carbohydrate active transport system, catalyzes the phosphorylation of incoming sugar substrates concomitantly with their translocation across the cell membrane. The enzyme II CmtAB PTS system is involved in D-mannitol transport. The sequence is that of PTS system mannitol-specific EIICB component (mtlA) from Streptococcus pneumoniae (strain ATCC BAA-255 / R6).